The sequence spans 639 residues: Protein phosphatase 2C 35 (639 aa).

Positions 227–630 (GGDPCGLQWA…DDVSVIVISL (404 aa)) constitute a PPM-type phosphatase domain. Positions 262 and 263 each coordinate Mn(2+). Residues 295-341 (QNVQHDQRPDQPGSAPSTTASDNQDQWGRRRRTRRSRPPRGADDDQR) are disordered. A compositionally biased stretch (polar residues) spans 308–320 (SAPSTTASDNQDQ). Positions 323–332 (RRRRTRRSRP) are enriched in basic residues. Mn(2+) contacts are provided by D558 and D621.

Belongs to the PP2C family. As to quaternary structure, interacts with XA21 (via juxtamembrane and kinase domains). Mg(2+) is required as a cofactor. Requires Mn(2+) as cofactor.

It is found in the cell membrane. It carries out the reaction O-phospho-L-seryl-[protein] + H2O = L-seryl-[protein] + phosphate. The catalysed reaction is O-phospho-L-threonyl-[protein] + H2O = L-threonyl-[protein] + phosphate. In terms of biological role, protein phosphatase that acts on XA21 pathogen recognition receptor. Negatively regulates cell death and XA21-mediated innate immunity. The chain is Protein phosphatase 2C 35 (XB15) from Oryza sativa subsp. japonica (Rice).